The following is a 182-amino-acid chain: Adenine phosphoribosyltransferase (182 aa).

Belongs to the purine/pyrimidine phosphoribosyltransferase family. Homodimer.

The protein resides in the cytoplasm. It carries out the reaction AMP + diphosphate = 5-phospho-alpha-D-ribose 1-diphosphate + adenine. Its pathway is purine metabolism; AMP biosynthesis via salvage pathway; AMP from adenine: step 1/1. Catalyzes a salvage reaction resulting in the formation of AMP, that is energically less costly than de novo synthesis. This is Adenine phosphoribosyltransferase from Bordetella pertussis (strain Tohama I / ATCC BAA-589 / NCTC 13251).